The primary structure comprises 297 residues: Light-independent protochlorophyllide reductase iron-sulfur ATP-binding protein (297 aa).

Residues 41–46 and lysine 70 each bind ATP; that span reads GIGKST. Serine 45 is a Mg(2+) binding site. 2 residues coordinate [4Fe-4S] cluster: cysteine 126 and cysteine 160. ATP-binding positions include 211-212 and 235-237; these read NR and PDL.

The protein belongs to the NifH/BchL/ChlL family. As to quaternary structure, homodimer. Protochlorophyllide reductase is composed of three subunits; BchL, BchN and BchB. It depends on [4Fe-4S] cluster as a cofactor.

It carries out the reaction chlorophyllide a + oxidized 2[4Fe-4S]-[ferredoxin] + 2 ADP + 2 phosphate = protochlorophyllide a + reduced 2[4Fe-4S]-[ferredoxin] + 2 ATP + 2 H2O. It participates in porphyrin-containing compound metabolism; bacteriochlorophyll biosynthesis (light-independent). Functionally, component of the dark-operative protochlorophyllide reductase (DPOR) that uses Mg-ATP and reduced ferredoxin to reduce ring D of protochlorophyllide (Pchlide) to form chlorophyllide a (Chlide). This reaction is light-independent. The L component serves as a unique electron donor to the NB-component of the complex, and binds Mg-ATP. This chain is Light-independent protochlorophyllide reductase iron-sulfur ATP-binding protein, found in Methylorubrum extorquens (strain PA1) (Methylobacterium extorquens).